Reading from the N-terminus, the 247-residue chain is Probable transcriptional regulatory protein BT_0627 (247 aa).

The protein belongs to the TACO1 family.

The protein localises to the cytoplasm. The chain is Probable transcriptional regulatory protein BT_0627 from Bacteroides thetaiotaomicron (strain ATCC 29148 / DSM 2079 / JCM 5827 / CCUG 10774 / NCTC 10582 / VPI-5482 / E50).